The primary structure comprises 286 residues: Isopentenyl-diphosphate Delta-isomerase II (286 aa).

The region spanning 104-256 is the Nudix hydrolase domain; that stretch reads MLHRAFSVFL…GLKLSPWFRL (153 aa). Residues Cys141 and Glu203 contribute to the active site.

This sequence belongs to the IPP isomerase type 1 family.

The catalysed reaction is isopentenyl diphosphate = dimethylallyl diphosphate. The protein operates within isoprenoid biosynthesis; dimethylallyl diphosphate biosynthesis; dimethylallyl diphosphate from isopentenyl diphosphate: step 1/1. Its pathway is porphyrin-containing compound metabolism; chlorophyll biosynthesis. Functionally, catalyzes the 1,3-allylic rearrangement of the homoallylic substrate isopentenyl (IPP) to its highly electrophilic allylic isomer, dimethylallyl diphosphate (DMAPP). The chain is Isopentenyl-diphosphate Delta-isomerase II (IPI2) from Clarkia breweri (Fairy fans).